The chain runs to 384 residues: Lipid-A-disaccharide synthase (384 aa).

Belongs to the LpxB family.

The catalysed reaction is a lipid X + a UDP-2-N,3-O-bis[(3R)-3-hydroxyacyl]-alpha-D-glucosamine = a lipid A disaccharide + UDP + H(+). It participates in bacterial outer membrane biogenesis; LPS lipid A biosynthesis. Functionally, condensation of UDP-2,3-diacylglucosamine and 2,3-diacylglucosamine-1-phosphate to form lipid A disaccharide, a precursor of lipid A, a phosphorylated glycolipid that anchors the lipopolysaccharide to the outer membrane of the cell. The sequence is that of Lipid-A-disaccharide synthase from Gloeothece citriformis (strain PCC 7424) (Cyanothece sp. (strain PCC 7424)).